Here is a 340-residue protein sequence, read N- to C-terminus: Ketol-acid reductoisomerase (NADP(+)) (340 aa).

The KARI N-terminal Rossmann domain maps to 5-182 (MEYEKDVKVA…GSARVGLLET (178 aa)). Residues 26-29 (YGSQ), arginine 49, serine 53, and 83-86 (DEIQ) contribute to the NADP(+) site. Histidine 108 is an active-site residue. NADP(+) is bound at residue glycine 134. Positions 183-328 (TYKEETEEDL…AELRKAMPFV (146 aa)) constitute a KARI C-terminal knotted domain. Residues aspartate 191, glutamate 195, glutamate 227, and glutamate 231 each contribute to the Mg(2+) site. Residue serine 252 coordinates substrate.

This sequence belongs to the ketol-acid reductoisomerase family. It depends on Mg(2+) as a cofactor.

It carries out the reaction (2R)-2,3-dihydroxy-3-methylbutanoate + NADP(+) = (2S)-2-acetolactate + NADPH + H(+). The catalysed reaction is (2R,3R)-2,3-dihydroxy-3-methylpentanoate + NADP(+) = (S)-2-ethyl-2-hydroxy-3-oxobutanoate + NADPH + H(+). It participates in amino-acid biosynthesis; L-isoleucine biosynthesis; L-isoleucine from 2-oxobutanoate: step 2/4. The protein operates within amino-acid biosynthesis; L-valine biosynthesis; L-valine from pyruvate: step 2/4. Its function is as follows. Involved in the biosynthesis of branched-chain amino acids (BCAA). Catalyzes an alkyl-migration followed by a ketol-acid reduction of (S)-2-acetolactate (S2AL) to yield (R)-2,3-dihydroxy-isovalerate. In the isomerase reaction, S2AL is rearranged via a Mg-dependent methyl migration to produce 3-hydroxy-3-methyl-2-ketobutyrate (HMKB). In the reductase reaction, this 2-ketoacid undergoes a metal-dependent reduction by NADPH to yield (R)-2,3-dihydroxy-isovalerate. This Streptococcus sanguinis (strain SK36) protein is Ketol-acid reductoisomerase (NADP(+)).